The primary structure comprises 267 residues: Pyrroline-5-carboxylate reductase (267 aa).

The protein belongs to the pyrroline-5-carboxylate reductase family.

The protein resides in the cytoplasm. It carries out the reaction L-proline + NADP(+) = (S)-1-pyrroline-5-carboxylate + NADPH + 2 H(+). It catalyses the reaction L-proline + NAD(+) = (S)-1-pyrroline-5-carboxylate + NADH + 2 H(+). The protein operates within amino-acid biosynthesis; L-proline biosynthesis; L-proline from L-glutamate 5-semialdehyde: step 1/1. Functionally, catalyzes the reduction of 1-pyrroline-5-carboxylate (PCA) to L-proline. In Synechocystis sp. (strain ATCC 27184 / PCC 6803 / Kazusa), this protein is Pyrroline-5-carboxylate reductase.